Here is a 251-residue protein sequence, read N- to C-terminus: MKLRLSALALGTTLLVGCASSGTDQQGRSDPLEGFNRTMYNFNFNVLDPYIVRPVAVAWRDYVPQPARNGLSNFTGNLEEPAVMVNYFLQGDPYQGMVHFTRFFLNTILGMGGFIDVAGMANPKLQRTEPHRFGSTLGHYGVGYGPYVQLPFYGSFTLRDDGGDMADALYPVLSWLTWPMSVGKWTLEGIETRAQLLDSDGLLRQSSDPYIMVREAYFQRHDFIANGGELKPQENPNAQAIQDDLKDIDSE.

Positions 1–17 (MKLRLSALALGTTLLVG) are cleaved as a signal peptide. Cys-18 carries N-palmitoyl cysteine lipidation. Cys-18 carries the S-diacylglycerol cysteine lipid modification. The interval 228–251 (GELKPQENPNAQAIQDDLKDIDSE) is disordered.

It belongs to the MlaA family.

The protein resides in the cell outer membrane. In terms of biological role, involved in a phospholipid transport pathway that maintains lipid asymmetry in the outer membrane by retrograde trafficking of phospholipids from the outer membrane to the inner membrane. Required for intercellular spreading of S.flexneri. This Shigella flexneri protein is Intermembrane phospholipid transport system lipoprotein MlaA.